The sequence spans 608 residues: UvrABC system protein C (608 aa).

One can recognise a GIY-YIG domain in the interval 16–94 (NRPGVYRMFD…IKEWRPPYNI (79 aa)). One can recognise a UVR domain in the interval 204–239 (NALADELNVGMEQAAMRLDFEKAAELRDQVAILRRV).

This sequence belongs to the UvrC family. As to quaternary structure, interacts with UvrB in an incision complex.

The protein localises to the cytoplasm. Functionally, the UvrABC repair system catalyzes the recognition and processing of DNA lesions. UvrC both incises the 5' and 3' sides of the lesion. The N-terminal half is responsible for the 3' incision and the C-terminal half is responsible for the 5' incision. This chain is UvrABC system protein C, found in Pseudomonas aeruginosa (strain ATCC 15692 / DSM 22644 / CIP 104116 / JCM 14847 / LMG 12228 / 1C / PRS 101 / PAO1).